A 319-amino-acid polypeptide reads, in one-letter code: Thioredoxin reductase (319 aa).

Residues 11–14 (SGPA), 40–41 (IA), Gln45, Asn54, Cys145, Asp288, and 295–297 (RQA) contribute to the FAD site. Residues Cys142 and Cys145 are joined by a disulfide bond.

It belongs to the class-II pyridine nucleotide-disulfide oxidoreductase family. Homodimer. Requires FAD as cofactor.

It is found in the cytoplasm. The catalysed reaction is [thioredoxin]-dithiol + NADP(+) = [thioredoxin]-disulfide + NADPH + H(+). In Candida glabrata (strain ATCC 2001 / BCRC 20586 / JCM 3761 / NBRC 0622 / NRRL Y-65 / CBS 138) (Yeast), this protein is Thioredoxin reductase (TRR1).